The following is a 279-amino-acid chain: Ribose-phosphate pyrophosphokinase (279 aa).

ATP contacts are provided by residues Asp-31–Glu-33 and Arg-88–Gln-89. Mg(2+) is bound by residues His-121 and Asp-159. Residue Lys-182 is part of the active site. D-ribose 5-phosphate contacts are provided by residues Arg-184, Asp-208, and Ser-212–Thr-216.

It belongs to the ribose-phosphate pyrophosphokinase family. Class III (archaeal) subfamily. Mg(2+) serves as cofactor.

The protein localises to the cytoplasm. The catalysed reaction is D-ribose 5-phosphate + ATP = 5-phospho-alpha-D-ribose 1-diphosphate + AMP + H(+). The protein operates within metabolic intermediate biosynthesis; 5-phospho-alpha-D-ribose 1-diphosphate biosynthesis; 5-phospho-alpha-D-ribose 1-diphosphate from D-ribose 5-phosphate (route I): step 1/1. Its function is as follows. Involved in the biosynthesis of the central metabolite phospho-alpha-D-ribosyl-1-pyrophosphate (PRPP) via the transfer of pyrophosphoryl group from ATP to 1-hydroxyl of ribose-5-phosphate (Rib-5-P). This is Ribose-phosphate pyrophosphokinase from Pyrococcus furiosus (strain ATCC 43587 / DSM 3638 / JCM 8422 / Vc1).